A 34-amino-acid chain; its full sequence is Corticostatin-2 (34 aa).

Disulfide bonds link Cys3/Cys32, Cys5/Cys21, and Cys11/Cys31.

The protein belongs to the alpha-defensin family.

The protein localises to the secreted. Its function is as follows. Microbicidal activity and inhibits corticotropin (ACTH) stimulated corticosterone production. The protein is Corticostatin-2 of Oryctolagus cuniculus (Rabbit).